Here is a 684-residue protein sequence, read N- to C-terminus: Acetyl-coenzyme A synthetase 2 (684 aa).

CoA contacts are provided by residues 207–210 and Thr-326; that span reads RGGK. ATP contacts are provided by residues 402–404, 426–431, Asp-517, and Arg-532; these read GEP and DTMWQT. Ser-540 lines the CoA pocket. Position 543 (Arg-543) interacts with ATP. Arg-613 is a CoA binding site.

This sequence belongs to the ATP-dependent AMP-binding enzyme family.

It catalyses the reaction acetate + ATP + CoA = acetyl-CoA + AMP + diphosphate. This is Acetyl-coenzyme A synthetase 2 (ACS2) from Kluyveromyces lactis (strain ATCC 8585 / CBS 2359 / DSM 70799 / NBRC 1267 / NRRL Y-1140 / WM37) (Yeast).